The primary structure comprises 2193 residues: Protein sidekick-1 (2193 aa).

Over residues 1–23 the composition is skewed to low complexity; that stretch reads MARARPSVAGGGVAAPPERAGPG. The disordered stretch occupies residues 1–56; sequence MARARPSVAGGGVAAPPERAGPGRPRRSRTGHHCDPECPGLRAAPRTPGPGAGRRA. Ig-like C2-type domains are found at residues 86–168, 173–259, 275–363, 368–458, and 462–551; these read PYFK…SEIQ, GNFM…SPFI, PIIV…AFLS, PYFT…LDVT, and PAFT…AMLT. C108 and C151 are oxidised to a cystine. N-linked (GlcNAc...) asparagine glycosylation is found at N123, N253, and N283. Intrachain disulfides connect C297–C344, C390–C440, and C483–C535. N-linked (GlcNAc...) asparagine glycosylation is found at N532, N545, and N554. The 90-residue stretch at 556–645 folds into the Ig-like C2-type 6 domain; the sequence is TSIVHPPEDR…GSDSRTARLE (90 aa). A disulfide bridge connects residues C577 and C629. Fibronectin type-III domains follow at residues 652–748, 753–849, 854–952, 956–1050, 1054–1153, 1158–1256, 1261–1358, 1362–1456, 1461–1558, 1563–1681, 1686–1782, 1786–1881, and 1884–1982; these read PPQN…LPEE, PPKN…TLQG, PPQN…THED, AVGH…VPPD, APSN…TLQA, APTS…TRES, APEN…TKDD, PPVR…TEKR, PPRE…TLQD, PPGS…VGEA, APQN…THQA, PPSF…AGPA, and SPGS…SAQA. Residues N764, N803, N864, N997, and N1006 are each glycosylated (N-linked (GlcNAc...) asparagine). 2 N-linked (GlcNAc...) asparagine glycosylation sites follow: N1264 and N1315. N-linked (GlcNAc...) asparagine glycosylation is found at N1636, N1730, N1801, and N1875. Residues 1992–2012 form a helical membrane-spanning segment; sequence FLLVMALSSLLLILLVVFVLV. The Cytoplasmic segment spans residues 2013–2193; it reads LHGQSKKYKS…APLTGFSSFV (181 aa). Residues 2057–2080 are disordered; it reads STFSKKNGTRSPPRPSPGGLHYSD. Positions 2187 to 2193 match the PDZ-binding motif; sequence TGFSSFV.

It belongs to the sidekick family. In terms of assembly, homodimer; mediates homophilic interactions to promote cell adhesion. Interacts (via PDZ-binding motif) with MAGI1, MAGI2, DLG2, DLG3 and DLG4. As to quaternary structure, does not mediate homophilic interactions. In terms of tissue distribution, expressed by non-overlapping subsets of retinal neurons. Sdk1 and Sdk2 are expressed in non-overlapping subsets of interneurons and retinal ganglion cells (RGCs) that form synapses in distinct inner plexiform layer (IPL) sublaminae (at protein level).

It is found in the cell membrane. The protein localises to the synapse. Adhesion molecule that promotes lamina-specific synaptic connections in the retina. Expressed in specific subsets of interneurons and retinal ganglion cells (RGCs) and promotes synaptic connectivity via homophilic interactions. The chain is Protein sidekick-1 from Mus musculus (Mouse).